We begin with the raw amino-acid sequence, 130 residues long: S-adenosylmethionine decarboxylase proenzyme (130 aa).

The Schiff-base intermediate with substrate; via pyruvic acid role is filled by serine 63. Serine 63 carries the post-translational modification Pyruvic acid (Ser); by autocatalysis. Histidine 68 acts as the Proton acceptor; for processing activity in catalysis. Catalysis depends on cysteine 83, which acts as the Proton donor; for catalytic activity.

Belongs to the prokaryotic AdoMetDC family. Type 1 subfamily. In terms of assembly, heterotetramer of two alpha and two beta chains arranged as a dimer of alpha/beta heterodimers. The cofactor is pyruvate. In terms of processing, is synthesized initially as an inactive proenzyme. Formation of the active enzyme involves a self-maturation process in which the active site pyruvoyl group is generated from an internal serine residue via an autocatalytic post-translational modification. Two non-identical subunits are generated from the proenzyme in this reaction, and the pyruvate is formed at the N-terminus of the alpha chain, which is derived from the carboxyl end of the proenzyme. The post-translation cleavage follows an unusual pathway, termed non-hydrolytic serinolysis, in which the side chain hydroxyl group of the serine supplies its oxygen atom to form the C-terminus of the beta chain, while the remainder of the serine residue undergoes an oxidative deamination to produce ammonia and the pyruvoyl group blocking the N-terminus of the alpha chain.

The catalysed reaction is S-adenosyl-L-methionine + H(+) = S-adenosyl 3-(methylsulfanyl)propylamine + CO2. Its pathway is amine and polyamine biosynthesis; S-adenosylmethioninamine biosynthesis; S-adenosylmethioninamine from S-adenosyl-L-methionine: step 1/1. Its function is as follows. Catalyzes the decarboxylation of S-adenosylmethionine to S-adenosylmethioninamine (dcAdoMet), the propylamine donor required for the synthesis of the polyamines spermine and spermidine from the diamine putrescine. This is S-adenosylmethionine decarboxylase proenzyme from Thermotoga petrophila (strain ATCC BAA-488 / DSM 13995 / JCM 10881 / RKU-1).